Consider the following 359-residue polypeptide: Type-1 angiotensin II receptor (359 aa).

Topologically, residues 1–25 (MALNSSADDGIKRIQDDCPKAGRHS) are extracellular. Asparagine 4 carries an N-linked (GlcNAc...) asparagine glycan. Residues glutamine 15 and aspartate 17 each coordinate angiotensin II. 2 disulfides stabilise this stretch: cysteine 18–cysteine 274 and cysteine 101–cysteine 180. The helical transmembrane segment at 26-55 (YIFVMIPTLYSIIFVVGIFGNSLVVIVIYF) threads the bilayer. Residues 56–61 (YMKLKT) are Cytoplasmic-facing. Residues 62–89 (VASVFLLNLALADLCFLLTLPVWAVYTA) form a helical membrane-spanning segment. Topologically, residues 90–98 (MEYRWPFGN) are extracellular. The helical transmembrane segment at 99–125 (HLCKIASAGISFNLYASVFLLTCLSID) threads the bilayer. Residues 126 to 141 (RYLAIVHPMKSRLRRT) are Cytoplasmic-facing. The chain crosses the membrane as a helical span at residues 142–165 (MLVAKVTCVVIWLLAGLASLPAVI). Residues 166–190 (HRNVYFIENTNSTVCAFHYESQNST) are Extracellular-facing. Arginine 167 provides a ligand contact to angiotensin II. N-linked (GlcNAc...) asparagine glycosylation is present at asparagine 176. Angiotensin II-binding residues include phenylalanine 182, histidine 183, and tyrosine 184. The N-linked (GlcNAc...) asparagine glycan is linked to asparagine 188. A helical transmembrane segment spans residues 191–216 (LPVGLGLTKNILGFMFPFLIILTSYT). Lysine 199 serves as a coordination point for angiotensin II. Over 217–239 (LIWKALKKAYEIQKNKPRNDDIF) the chain is Cytoplasmic. Residues 240-268 (RIIMAIVLFFFFSWIPHQIFTFLDVLIQL) form a helical membrane-spanning segment. Residues 269–278 (GVIRDCKIAD) are Extracellular-facing. Residues 279-304 (VVDTAMPITICIAYFNNCLNPLFYGF) traverse the membrane as a helical segment. Residues 305 to 359 (LGKKFKKYFLQLLKYIPPKAKSHSSLSTKMSTLSYRPSDNMNSSAKKPASCFEVE) are Cytoplasmic-facing. Residue cysteine 355 is the site of S-palmitoyl cysteine attachment.

Belongs to the G-protein coupled receptor 1 family. As to quaternary structure, interacts with MAS1. Interacts with ARRB1. Interacts with FLNA (via filamin repeat 21); increases PKA-mediated phosphorylation of FLNA. Post-translationally, C-terminal Ser or Thr residues may be phosphorylated.

The protein resides in the cell membrane. In terms of biological role, receptor for angiotensin II, a vasoconstricting peptide, which acts as a key regulator of blood pressure and sodium retention by the kidney. The activated receptor in turn couples to G-alpha proteins G(q) (GNAQ, GNA11, GNA14 or GNA15) and thus activates phospholipase C and increases the cytosolic Ca(2+) concentrations, which in turn triggers cellular responses such as stimulation of protein kinase C. In Meriones unguiculatus (Mongolian jird), this protein is Type-1 angiotensin II receptor (AGTR1).